Consider the following 478-residue polypeptide: Dihydrolipoyl dehydrogenase (478 aa).

FAD-binding positions include glutamate 36–cysteine 45, lysine 54, and alanine 117. Residues cysteine 45 and cysteine 50 are joined by a disulfide bond. NAD(+) contacts are provided by residues glycine 183–isoleucine 187, glutamate 206, valine 239, and alanine 270–arginine 273. FAD-binding residues include aspartate 313 and alanine 321. The Proton acceptor role is filled by histidine 445.

The protein belongs to the class-I pyridine nucleotide-disulfide oxidoreductase family. Homodimer. It depends on FAD as a cofactor.

The protein resides in the cytoplasm. The catalysed reaction is N(6)-[(R)-dihydrolipoyl]-L-lysyl-[protein] + NAD(+) = N(6)-[(R)-lipoyl]-L-lysyl-[protein] + NADH + H(+). Functionally, lipoamide dehydrogenase is a component of the alpha-ketoacid dehydrogenase complexes. The chain is Dihydrolipoyl dehydrogenase (lpdA) from Haemophilus influenzae (strain ATCC 51907 / DSM 11121 / KW20 / Rd).